We begin with the raw amino-acid sequence, 892 residues long: MFSSRIWLLLAVTVGVCLAVPDLDEIKKNLRKHGPDYYKNQPKMNENTVRLLKVDYWFRTESMIYDDIDNKEKDPSTVIAGNFSFETLHHDVEGGMLGRFTLTQCNTDNCGNPSPIYIAFRQGGNNAEHILKASDESDATWNFLYAIVNTIYTPAEYGEGDEQTVDTIYGRCFVNFGRPEDKRFRRIIEKCDLGYGTNFTKFEGIESVQYDQDVWYTQNTKVDADIIMVDAIEMLAFKSPLHEKYGFTLESRTHVEITNRTRVFVTSYCNDTVPSAKCAEQAFGAVRVGGKLYEHVKIAQEQSNKLTKLIGTYRRHLQDMGDSHICEKHSLLYSQIAQEARLAKRQDWEAAIQYPENDHVLSLIASALGGVGTAESITTAREVLLTASPDYLDDLLFGISQSSSNNEKWHKQLMYWLGSLDKKSEEYWKVANTIATVLNKRCEASTSSLNSCNKGKETIVNKFITDLTAGGVEVRVLEVLENIPIFGSYTFAKKFICETESEDVQKAALNVILAASKNLYETQLTHKLIKLFRNTCSQETPTSHSQLAIDILLKCVPDHQNVATLILRTETLNPDDQEKWHYLYKAIEASGNKDELKAEFWSRMRKFKVFRPNFLHRALQADSHVHWQEIADASNFQLFSTANTEFLQKSFKRSIFELSMKKGRKEHNLFSLSIDTEHLEQFVTGSASSRSGAPQGSVRIGVAGHKLPTHHIFKGSTDLLSTVWEADGRTHKAFEGHVPVRDVRLSVPLLSGLTLDVDSVGAISMRVLASAEVSLWNQRSNAKAEAYTSGSLHLTASLYHHSEPVRHVESTISALSTFTTDTRAIFETLPYDFCLRTSNSNVDINQKTVVQDQIGKHKKKTLNRKRVHPGVTYRLDDSTIRQCNSYLEQFRL.

Residues 1-19 (MFSSRIWLLLAVTVGVCLA) form the signal peptide.

In terms of assembly, heterodimer; heterodimerizes with protein disulfide isomerase.

The protein resides in the endoplasmic reticulum. Catalyzes the transport of cholesteryl ester, and phospholipid between phospholipid surfaces. Does not catalyze transport of triglycerides. Required for the assembly and secretion of plasma lipoproteins that contain apolipoprotein B. Required for normal expression of klf-3. The chain is Microsomal triglyceride transfer protein homolog from Caenorhabditis elegans.